We begin with the raw amino-acid sequence, 232 residues long: Acyl-protein thioesterase 1 (232 aa).

Residues serine 125, aspartate 179, and histidine 212 each act as charge relay system in the active site.

This sequence belongs to the AB hydrolase superfamily. AB hydrolase 2 family.

The protein resides in the cytoplasm. The protein localises to the nucleus. It catalyses the reaction S-hexadecanoyl-L-cysteinyl-[protein] + H2O = L-cysteinyl-[protein] + hexadecanoate + H(+). Its function is as follows. Hydrolyzes fatty acids from S-acylated cysteine residues in proteins with a strong preference for palmitoylated G-alpha proteins over other acyl substrates. Mediates the deacylation of G-alpha proteins such as GPA1 in vivo, but has weak or no activity toward palmitoylated Ras proteins. Has weak lysophospholipase activity in vitro; however such activity may not exist in vivo. This is Acyl-protein thioesterase 1 from Debaryomyces hansenii (strain ATCC 36239 / CBS 767 / BCRC 21394 / JCM 1990 / NBRC 0083 / IGC 2968) (Yeast).